A 457-amino-acid polypeptide reads, in one-letter code: Cell division protein FtsA (457 aa).

Belongs to the FtsA/MreB family. In terms of assembly, self-interacts. Interacts with FtsZ.

It is found in the cell membrane. Functionally, cell division protein that is involved in the assembly of the Z ring. May serve as a membrane anchor for the Z ring. Increased expression restores growth to a PBP2b (penA) deletion strain as well as mreCD and rodA deletions, but not gpsB or rodZ deletions. Does not restore wild-type cell morphology to the penA deletion. The polypeptide is Cell division protein FtsA (Streptococcus pneumoniae serotype 2 (strain D39 / NCTC 7466)).